Here is a 212-residue protein sequence, read N- to C-terminus: Ubiquitin-like protein MDY2 (212 aa).

Residues 74 to 152 (VHLTLKKIQA…TITVMIKPNP (79 aa)) enclose the Ubiquitin-like domain. A disordered region spans residues 150–177 (PNPTISKEPEAEKSTNSPAPAPPQELTV).

As to quaternary structure, interacts with GET4.

It localises to the cytoplasm. It is found in the cytosol. Its subcellular location is the nucleus. Its function is as follows. Required for efficient mating. Involved in the production of alpha-factor, the KAR9 and TUB1 location to the shmoo tip and nuclear migration into pheromone-induced shmoos. This chain is Ubiquitin-like protein MDY2 (MDY2), found in Saccharomyces cerevisiae (strain ATCC 204508 / S288c) (Baker's yeast).